The chain runs to 649 residues: Lysophospholipase (649 aa).

The first 21 residues, 1-21 (MNLKEWLLFSDAVFFAQGTLA), serve as a signal peptide directing secretion. N-linked (GlcNAc...) asparagine glycosylation is found at Asn32, Asn51, Asn77, Asn90, Asn121, Asn158, Asn168, Asn213, Asn275, Asn343, Asn386, Asn457, Asn487, Asn511, Asn539, Asn563, and Asn580. The PLA2c domain occupies 34–584 (SCDEDINLIR…TNYCWNGTID (551 aa)).

This sequence belongs to the lysophospholipase family.

Its subcellular location is the secreted. The enzyme catalyses a 1-acyl-sn-glycero-3-phosphocholine + H2O = sn-glycerol 3-phosphocholine + a fatty acid + H(+). Its function is as follows. Catalyzes the release of fatty acids from lysophospholipids. This chain is Lysophospholipase, found in Torulaspora delbrueckii (Yeast).